We begin with the raw amino-acid sequence, 148 residues long: Probable histone H2B.2 (148 aa).

Residues 1 to 32 (MAPKGEKKPAEKKPAEEKKSTVAEKAPAEKKP) are compositionally biased toward basic and acidic residues. The disordered stretch occupies residues 1–57 (MAPKGEKKPAEKKPAEEKKSTVAEKAPAEKKPKAGKKLPKEGGSAAGEKKKKRSKKS). 3 positions are modified to N6-acetyllysine: Lys7, Lys36, and Lys37. A Glycyl lysine isopeptide (Lys-Gly) (interchain with G-Cter in ubiquitin) cross-link involves residue Lys144.

This sequence belongs to the histone H2B family. As to quaternary structure, the nucleosome is a histone octamer containing two molecules each of H2A, H2B, H3 and H4 assembled in one H3-H4 heterotetramer and two H2A-H2B heterodimers. The octamer wraps approximately 147 bp of DNA. Can be acetylated to form H2BK6ac, H2BK33ac and H2BK34ac. Post-translationally, monoubiquitinated to form H2BK143ub1; may give a specific tag for epigenetic transcriptional activation.

The protein resides in the nucleus. It is found in the chromosome. In terms of biological role, core component of nucleosome. Nucleosomes wrap and compact DNA into chromatin, limiting DNA accessibility to the cellular machineries which require DNA as a template. Histones thereby play a central role in transcription regulation, DNA repair, DNA replication and chromosomal stability. DNA accessibility is regulated via a complex set of post-translational modifications of histones, also called histone code, and nucleosome remodeling. The sequence is that of Probable histone H2B.2 from Medicago truncatula (Barrel medic).